Here is a 132-residue protein sequence, read N- to C-terminus: Ribosome-binding factor A (132 aa).

It belongs to the RbfA family. Monomer. Binds 30S ribosomal subunits, but not 50S ribosomal subunits or 70S ribosomes.

The protein resides in the cytoplasm. Functionally, one of several proteins that assist in the late maturation steps of the functional core of the 30S ribosomal subunit. Associates with free 30S ribosomal subunits (but not with 30S subunits that are part of 70S ribosomes or polysomes). Required for efficient processing of 16S rRNA. May interact with the 5'-terminal helix region of 16S rRNA. The sequence is that of Ribosome-binding factor A from Xanthomonas campestris pv. campestris (strain 8004).